The following is a 183-amino-acid chain: dCTP deaminase (183 aa).

DCTP is bound by residues arginine 97 to arginine 102 and aspartate 113. The active-site Proton donor/acceptor is the glutamate 123. Positions 155 and 162 each coordinate dCTP.

The protein belongs to the dCTP deaminase family. As to quaternary structure, homotrimer.

The enzyme catalyses dCTP + H2O + H(+) = dUTP + NH4(+). Its pathway is pyrimidine metabolism; dUMP biosynthesis; dUMP from dCTP (dUTP route): step 1/2. In terms of biological role, catalyzes the deamination of dCTP to dUTP. This Sulfurisphaera tokodaii (strain DSM 16993 / JCM 10545 / NBRC 100140 / 7) (Sulfolobus tokodaii) protein is dCTP deaminase.